We begin with the raw amino-acid sequence, 504 residues long: UDP-N-acetylmuramoylalanine--D-glutamate ligase (504 aa).

132–138 (GTNGKTT) is a binding site for ATP. A disordered region spans residues 284-310 (AQDRDATDEPAPTRRRKSESTAPPDIG).

Belongs to the MurCDEF family.

The protein localises to the cytoplasm. It carries out the reaction UDP-N-acetyl-alpha-D-muramoyl-L-alanine + D-glutamate + ATP = UDP-N-acetyl-alpha-D-muramoyl-L-alanyl-D-glutamate + ADP + phosphate + H(+). The protein operates within cell wall biogenesis; peptidoglycan biosynthesis. Cell wall formation. Catalyzes the addition of glutamate to the nucleotide precursor UDP-N-acetylmuramoyl-L-alanine (UMA). The chain is UDP-N-acetylmuramoylalanine--D-glutamate ligase from Paraburkholderia phymatum (strain DSM 17167 / CIP 108236 / LMG 21445 / STM815) (Burkholderia phymatum).